Reading from the N-terminus, the 431-residue chain is D-inositol 3-phosphate glycosyltransferase (431 aa).

Histidine 14 is a 1D-myo-inositol 3-phosphate binding site. UDP-N-acetyl-alpha-D-glucosamine contacts are provided by residues 20–21 and glycine 28; that span reads QP. 1D-myo-inositol 3-phosphate contacts are provided by residues 25-30, lysine 83, tyrosine 116, threonine 140, and arginine 160; that span reads DAGGMN. Residues arginine 240 and lysine 245 each coordinate UDP-N-acetyl-alpha-D-glucosamine. 3 residues coordinate Mg(2+): tyrosine 315, arginine 316, and alanine 318. UDP-N-acetyl-alpha-D-glucosamine is bound by residues glutamate 328 and glutamate 336. Threonine 342 contributes to the Mg(2+) binding site.

Belongs to the glycosyltransferase group 1 family. MshA subfamily. As to quaternary structure, homodimer.

The catalysed reaction is 1D-myo-inositol 3-phosphate + UDP-N-acetyl-alpha-D-glucosamine = 1D-myo-inositol 2-acetamido-2-deoxy-alpha-D-glucopyranoside 3-phosphate + UDP + H(+). In terms of biological role, catalyzes the transfer of a N-acetyl-glucosamine moiety to 1D-myo-inositol 3-phosphate to produce 1D-myo-inositol 2-acetamido-2-deoxy-glucopyranoside 3-phosphate in the mycothiol biosynthesis pathway. The sequence is that of D-inositol 3-phosphate glycosyltransferase from Thermomonospora curvata (strain ATCC 19995 / DSM 43183 / JCM 3096 / KCTC 9072 / NBRC 15933 / NCIMB 10081 / Henssen B9).